The chain runs to 290 residues: Urease accessory protein UreD (290 aa).

This sequence belongs to the UreD family. In terms of assembly, ureD, UreF and UreG form a complex that acts as a GTP-hydrolysis-dependent molecular chaperone, activating the urease apoprotein by helping to assemble the nickel containing metallocenter of UreC. The UreE protein probably delivers the nickel.

Its subcellular location is the cytoplasm. In terms of biological role, required for maturation of urease via the functional incorporation of the urease nickel metallocenter. The sequence is that of Urease accessory protein UreD from Paenarthrobacter aurescens (strain TC1).